The chain runs to 296 residues: MLRVLPRALRLPCSWRFSGARDCASHATTRTPEIQVQALTGPNQGITEILMNRPNARNALGNVFVSELLEALAQLREDQQVRVLLFRSAVKGVFCAGADLKEREQMSDVEVGTFVQRLRGLMSEIAAFPVPTIAAMDGFALGGGLELALACDLRIAASSAVMGLIETTRGLLPGAGGTQRLPRCLGVALAKELIFTGRRLNGAQARELGLVNHAVAQNEEGNAAYHRALALAQEILPQAPIAVRLGKVAIDRGMEVDIASGMAIEQMCYAQNIPTQDRLEGMAAFREKRAPKFVGK.

The N-terminal 17 residues, Met1–Phe17, are a transit peptide targeting the mitochondrion. An N6-acetyllysine; alternate modification is found at Lys101. Position 101 is an N6-succinyllysine; alternate (Lys101).

This sequence belongs to the enoyl-CoA hydratase/isomerase family.

The protein resides in the mitochondrion. The protein is Enoyl-CoA hydratase domain-containing protein 2, mitochondrial (Echdc2) of Mus musculus (Mouse).